We begin with the raw amino-acid sequence, 287 residues long: ATP synthase gamma chain (287 aa).

The protein belongs to the ATPase gamma chain family. F-type ATPases have 2 components, CF(1) - the catalytic core - and CF(0) - the membrane proton channel. CF(1) has five subunits: alpha(3), beta(3), gamma(1), delta(1), epsilon(1). CF(0) has three main subunits: a, b and c.

The protein localises to the cell membrane. In terms of biological role, produces ATP from ADP in the presence of a proton gradient across the membrane. The gamma chain is believed to be important in regulating ATPase activity and the flow of protons through the CF(0) complex. This Brevibacillus brevis (strain 47 / JCM 6285 / NBRC 100599) protein is ATP synthase gamma chain.